Reading from the N-terminus, the 184-residue chain is Elongation factor P (184 aa).

Belongs to the elongation factor P family.

The protein resides in the cytoplasm. Its pathway is protein biosynthesis; polypeptide chain elongation. In terms of biological role, involved in peptide bond synthesis. Stimulates efficient translation and peptide-bond synthesis on native or reconstituted 70S ribosomes in vitro. Probably functions indirectly by altering the affinity of the ribosome for aminoacyl-tRNA, thus increasing their reactivity as acceptors for peptidyl transferase. This chain is Elongation factor P, found in Leptothrix cholodnii (strain ATCC 51168 / LMG 8142 / SP-6) (Leptothrix discophora (strain SP-6)).